Here is a 327-residue protein sequence, read N- to C-terminus: Phenylalanine--tRNA ligase alpha subunit (327 aa).

Glu252 contributes to the Mg(2+) binding site.

This sequence belongs to the class-II aminoacyl-tRNA synthetase family. Phe-tRNA synthetase alpha subunit type 1 subfamily. As to quaternary structure, tetramer of two alpha and two beta subunits. It depends on Mg(2+) as a cofactor.

Its subcellular location is the cytoplasm. The enzyme catalyses tRNA(Phe) + L-phenylalanine + ATP = L-phenylalanyl-tRNA(Phe) + AMP + diphosphate + H(+). This is Phenylalanine--tRNA ligase alpha subunit from Cronobacter sakazakii (strain ATCC BAA-894) (Enterobacter sakazakii).